The chain runs to 429 residues: 4-hydroxybutyrate coenzyme A transferase (429 aa).

Residue 215–219 coordinates CoA; it reads GIGAI. The 5-glutamyl coenzyme A thioester intermediate role is filled by glutamate 238. Glycine 336 serves as a coordination point for CoA.

It belongs to the acetyl-CoA hydrolase/transferase family.

In Clostridium kluyveri (strain ATCC 8527 / DSM 555 / NBRC 12016 / NCIMB 10680 / K1), this protein is 4-hydroxybutyrate coenzyme A transferase (cat2).